The sequence spans 400 residues: MNFLRMSELSLTDKVVLIREDLNVPIKAGKVASDARLQASLPTIKMALEKGAAVIVCSHLGRPTEGNPEAIYSLAPVADYLSDKLSAPVTLNSDYFTQGVAIEAGEVVLLENVRFNEGEKKNDAALAQKYADLCDVFVMDAFGTAHRAQASTEGVTQAMHKAGKTACAGPLLAAELDALSLALETPAQPMLAIVGGSKVSTKLEVLHSLAELCSQIIVGGGIANTFLAAQGHSVGASLYEADLLDTAREIMGKTEILLPEYVVVADKSDIDFADFTGSLQQASATIKSVDTIGENDMILDIAPDSAIKLAEAITKAKTILWNGPVGVFEVDAFGQGTQIVAEAVKNSQGFSIAGGGDTLAAIDKYQVADGVSYMSTGGGAFLEFVEGKVLPAVAALEINA.

Substrate-binding positions include 21–23, arginine 36, 59–62, arginine 114, and arginine 147; these read DLN and HLGR. ATP-binding positions include lysine 202, glutamate 329, and 355–358; that span reads GGDT.

It belongs to the phosphoglycerate kinase family. Monomer.

It is found in the cytoplasm. It carries out the reaction (2R)-3-phosphoglycerate + ATP = (2R)-3-phospho-glyceroyl phosphate + ADP. It functions in the pathway carbohydrate degradation; glycolysis; pyruvate from D-glyceraldehyde 3-phosphate: step 2/5. The chain is Phosphoglycerate kinase from Psychrobacter cryohalolentis (strain ATCC BAA-1226 / DSM 17306 / VKM B-2378 / K5).